Consider the following 238-residue polypeptide: Small heat shock protein, chloroplastic (238 aa).

The disordered stretch occupies residues 31-87; it reads APLSTGGRTRPLSVASAAQENRDNSVDVQVSQAQNAGNQQGNAVQRRPRRAGFDISP. Positions 58 to 75 are enriched in low complexity; that stretch reads VQVSQAQNAGNQQGNAVQ. The sHSP domain maps to 124–238; that stretch reads AARARRRMPW…ERKVIDVQVQ (115 aa).

It belongs to the small heat shock protein (HSP20) family.

Its subcellular location is the plastid. The protein resides in the chloroplast. This chain is Small heat shock protein, chloroplastic (HSP21), found in Triticum aestivum (Wheat).